A 167-amino-acid polypeptide reads, in one-letter code: MNKPICSTGLRWLWLVVVVLILDLGSKQLVLQHFHLYESVPLIPYFNLTYAQNFGAAFSFLAEKDGWQRWFFAFIAVAISVVLMVMMYRASAKKKLSNIAYALIIGGALGNLFDRLVHGFVIDFIDFYVGDWHFPTFNIADMAICIGAGLVIIDSFLSPDEKTIKVG.

4 helical membrane passes run 5-25 (ICST…LDLG), 42-62 (LIPY…SFLA), 70-90 (WFFA…MYRA), and 102-122 (ALII…GFVI). Active-site residues include Asp-123 and Asp-141. The chain crosses the membrane as a helical span at residues 137-157 (FNIADMAICIGAGLVIIDSFL).

This sequence belongs to the peptidase A8 family.

It localises to the cell inner membrane. The enzyme catalyses Release of signal peptides from bacterial membrane prolipoproteins. Hydrolyzes -Xaa-Yaa-Zaa-|-(S,diacylglyceryl)Cys-, in which Xaa is hydrophobic (preferably Leu), and Yaa (Ala or Ser) and Zaa (Gly or Ala) have small, neutral side chains.. Its pathway is protein modification; lipoprotein biosynthesis (signal peptide cleavage). This protein specifically catalyzes the removal of signal peptides from prolipoproteins. This is Lipoprotein signal peptidase from Photorhabdus laumondii subsp. laumondii (strain DSM 15139 / CIP 105565 / TT01) (Photorhabdus luminescens subsp. laumondii).